Reading from the N-terminus, the 449-residue chain is Ribosomal protein uS12 methylthiotransferase RimO (449 aa).

The region spanning 15 to 125 (PRISFVSLGC…VLAAVHEAVP (111 aa)) is the MTTase N-terminal domain. Positions 24, 60, 89, 156, 160, and 163 each coordinate [4Fe-4S] cluster. A Radical SAM core domain is found at 142–379 (LTPRHYAYLK…MRTQQKVSAR (238 aa)). The 67-residue stretch at 382–448 (KRKVGTRQSV…PYDLSGTAVG (67 aa)) folds into the TRAM domain.

Belongs to the methylthiotransferase family. RimO subfamily. [4Fe-4S] cluster serves as cofactor.

It is found in the cytoplasm. The catalysed reaction is L-aspartate(89)-[ribosomal protein uS12]-hydrogen + (sulfur carrier)-SH + AH2 + 2 S-adenosyl-L-methionine = 3-methylsulfanyl-L-aspartate(89)-[ribosomal protein uS12]-hydrogen + (sulfur carrier)-H + 5'-deoxyadenosine + L-methionine + A + S-adenosyl-L-homocysteine + 2 H(+). In terms of biological role, catalyzes the methylthiolation of an aspartic acid residue of ribosomal protein uS12. The protein is Ribosomal protein uS12 methylthiotransferase RimO of Xanthobacter autotrophicus (strain ATCC BAA-1158 / Py2).